We begin with the raw amino-acid sequence, 171 residues long: Small ribosomal subunit protein uS4 (171 aa).

The region spanning Arg101–Glu165 is the S4 RNA-binding domain. The disordered stretch occupies residues Ser148–Glu171. Positions Phe152–Glu171 are enriched in basic and acidic residues.

It belongs to the universal ribosomal protein uS4 family. In terms of assembly, part of the 30S ribosomal subunit. Contacts protein S5. The interaction surface between S4 and S5 is involved in control of translational fidelity.

Functionally, one of the primary rRNA binding proteins, it binds directly to 16S rRNA where it nucleates assembly of the body of the 30S subunit. With S5 and S12 plays an important role in translational accuracy. The sequence is that of Small ribosomal subunit protein uS4 from Haloarcula marismortui (strain ATCC 43049 / DSM 3752 / JCM 8966 / VKM B-1809) (Halobacterium marismortui).